Consider the following 244-residue polypeptide: 14-3-3 protein homolog 1 (244 aa).

This sequence belongs to the 14-3-3 family.

This Echinococcus multilocularis (Fox tapeworm) protein is 14-3-3 protein homolog 1.